The following is a 319-amino-acid chain: MAMDSQPFRGHIPNGVPPNRTYQEVYAENGRWYGTFKKGKYMFPIDESSWSRAEMRVIVLPSTTRKLLVYWTWVAGQVSGASTWPIIGPRVYAEIYRHLKPYYGYFEQVEIDWSPRSDDGSLRRDGYVVQWANELMDAMDSFGRPIRLDSNLTKQRLADVGFDEIKEEVIQLPLNGWPTEVHNRELGRWFNLGVRQAFQPLSLAPLCRGHGRTPAQVDELAEKARGEVYSNSVRAYCTFPSFAEPAGYAQVTPKSTIPAPFQRAWVGSREPQSGTCSVQRENGANGDRSTLSATGTFHVIRRIRAAQTPAAVGKRQDAG.

A disordered region spans residues 269 to 293 (REPQSGTCSVQRENGANGDRSTLSA). Polar residues predominate over residues 270–293 (EPQSGTCSVQRENGANGDRSTLSA).

It belongs to the methyltransferase superfamily. LaeA methyltransferase family. In terms of assembly, component of the heterotrimeric velvet complex composed of laeA, veA and velB; VeA acting as a bridging protein between laeA and velB.

Its subcellular location is the nucleus. It catalyses the reaction L-methionyl-[protein] + S-adenosyl-L-methionine = S-methyl-L-methionyl-[protein] + S-adenosyl-L-homocysteine. Its function is as follows. Methyltransferase; component of the velvet transcription factor complex that acts as a global regulator for secondary metabolite gene expression. Controls the expression of the chaetoglobosin A biosynthesis cluster via the cheR transcription factor and the subsequent production of chaetoglobosin A. Positively regulates the expression of smtA and negatively regulates the expression of velB. LaeA also regulates pigmentation and spores production. The polypeptide is Protein-methionine methyltransferase laeA (Chaetomium globosum (strain ATCC 6205 / CBS 148.51 / DSM 1962 / NBRC 6347 / NRRL 1970) (Soil fungus)).